A 55-amino-acid chain; its full sequence is Conotoxin Cal22d (55 aa).

The propeptide occupies Gly1–Ala5.

In terms of processing, contains 4 disulfide bonds. Expressed by the venom duct.

It localises to the secreted. In terms of biological role, probable neurotoxin with unknown target. Possibly targets ion channels. In Californiconus californicus (California cone), this protein is Conotoxin Cal22d.